A 198-amino-acid chain; its full sequence is Recombination protein RecR (198 aa).

Residues Cys-56–Cys-71 form a C4-type zinc finger. The 97-residue stretch at Ala-79 to Pro-175 folds into the Toprim domain.

This sequence belongs to the RecR family.

May play a role in DNA repair. It seems to be involved in an RecBC-independent recombinational process of DNA repair. It may act with RecF and RecO. This Saccharopolyspora erythraea (strain ATCC 11635 / DSM 40517 / JCM 4748 / NBRC 13426 / NCIMB 8594 / NRRL 2338) protein is Recombination protein RecR.